Reading from the N-terminus, the 316-residue chain is Thymidylate synthase (316 aa).

DUMP-binding positions include Arg-23 and 178 to 179 (RR). Residue Cys-198 is the Nucleophile of the active site. Residues 218 to 221 (RSGD), Asn-229, and 259 to 261 (HIY) each bind dUMP. Asp-221 is a (6R)-5,10-methylene-5,6,7,8-tetrahydrofolate binding site. Ala-315 contributes to the (6R)-5,10-methylene-5,6,7,8-tetrahydrofolate binding site.

The protein belongs to the thymidylate synthase family. Bacterial-type ThyA subfamily. In terms of assembly, homodimer.

It localises to the cytoplasm. The enzyme catalyses dUMP + (6R)-5,10-methylene-5,6,7,8-tetrahydrofolate = 7,8-dihydrofolate + dTMP. It functions in the pathway pyrimidine metabolism; dTTP biosynthesis. In terms of biological role, catalyzes the reductive methylation of 2'-deoxyuridine-5'-monophosphate (dUMP) to 2'-deoxythymidine-5'-monophosphate (dTMP) while utilizing 5,10-methylenetetrahydrofolate (mTHF) as the methyl donor and reductant in the reaction, yielding dihydrofolate (DHF) as a by-product. This enzymatic reaction provides an intracellular de novo source of dTMP, an essential precursor for DNA biosynthesis. The sequence is that of Thymidylate synthase from Lactiplantibacillus plantarum (strain ATCC BAA-793 / NCIMB 8826 / WCFS1) (Lactobacillus plantarum).